We begin with the raw amino-acid sequence, 285 residues long: Stress response regulator protein 1 (285 aa).

Composition is skewed to low complexity over residues 43 to 58 (DTSSQNDSISTQSSNN) and 128 to 138 (SIISSKSSNKS). Disordered stretches follow at residues 43–66 (DTSSQNDSISTQSSNNDDTHSDQQ) and 114–142 (PLTPFDDQTTSPQDSIISSKSSNKSTTVV). Residues 158–276 (SFLIVDDNII…LDFMANSIDD (119 aa)) form the Response regulatory domain. Asp-209 is modified (4-aspartylphosphate).

Required for stress adaptation, morphogenesis and virulence. The chain is Stress response regulator protein 1 (SRR1) from Candida dubliniensis (strain CD36 / ATCC MYA-646 / CBS 7987 / NCPF 3949 / NRRL Y-17841) (Yeast).